The following is a 228-amino-acid chain: 2-C-methyl-D-erythritol 4-phosphate cytidylyltransferase (228 aa).

This sequence belongs to the IspD/TarI cytidylyltransferase family. IspD subfamily.

The catalysed reaction is 2-C-methyl-D-erythritol 4-phosphate + CTP + H(+) = 4-CDP-2-C-methyl-D-erythritol + diphosphate. The protein operates within isoprenoid biosynthesis; isopentenyl diphosphate biosynthesis via DXP pathway; isopentenyl diphosphate from 1-deoxy-D-xylulose 5-phosphate: step 2/6. Catalyzes the formation of 4-diphosphocytidyl-2-C-methyl-D-erythritol from CTP and 2-C-methyl-D-erythritol 4-phosphate (MEP). The polypeptide is 2-C-methyl-D-erythritol 4-phosphate cytidylyltransferase (Trichormus variabilis (strain ATCC 29413 / PCC 7937) (Anabaena variabilis)).